A 416-amino-acid polypeptide reads, in one-letter code: MLEQLTSLPDWLARGVADLFPLATNNSEKDQSLLLRLSQASRSNVPLRVKLGIDPTGSEIHLGHSIIFRKLRAFQDAGHTAILIIGDFTARIGDPTGKSKTRVQLSPEEVEKNSENYLNQLGKGQSKETSLLDFETEGRLEVRRNSEWLEGFDMVQIIDLLSKSTVGQMLAKEEFANRYTSGTSIALHEFLYPLFQGYDSVAVQADVELGGVDQKFNVAMGRDMQRHFSQKPQFGLLLPILVGLDGVQKMSKSLGNTVGLAEDALSMYSKLEKVPDSQVNNYLTLLTDCEIRDLTLNARELQKFMALNVTAQFHGLSVAKIAQKDASKIVSGLKETVEDVPVLSVSNVNFPTKAFHLLSSIGLCSSSSNARRQIQGGALRIDGKKILDPNFEFVDQKDIVGKILQLGKKTFRRISN.

The 'HIGH' region signature appears at 55–64; that stretch reads PTGSEIHLGH. Residues 249-253 carry the 'KMSKS' region motif; it reads KMSKS. K252 is a binding site for ATP. Residues 352 to 416 enclose the S4 RNA-binding domain; sequence TKAFHLLSSI…GKKTFRRISN (65 aa).

Belongs to the class-I aminoacyl-tRNA synthetase family. TyrS type 2 subfamily. Homodimer.

The protein resides in the cytoplasm. The catalysed reaction is tRNA(Tyr) + L-tyrosine + ATP = L-tyrosyl-tRNA(Tyr) + AMP + diphosphate + H(+). Its function is as follows. Catalyzes the attachment of tyrosine to tRNA(Tyr) in a two-step reaction: tyrosine is first activated by ATP to form Tyr-AMP and then transferred to the acceptor end of tRNA(Tyr). The sequence is that of Tyrosine--tRNA ligase from Prochlorococcus marinus (strain SARG / CCMP1375 / SS120).